Here is a 497-residue protein sequence, read N- to C-terminus: Angiopoietin-1 (497 aa).

The signal sequence occupies residues 1–19; that stretch reads MTVFLSFAFLAAILTHIGC. N-linked (GlcNAc...) asparagine glycosylation is found at N92, N122, N154, N243, and N294. Residues 158–256 adopt a coiled-coil conformation; sequence RLEIQLLENS…LQKQQLELMD (99 aa). Residues 276-496 form the Fibrinogen C-terminal domain; sequence KEEEKPFRDC…STTMMIRPLD (221 aa). Disulfide bonds link C285-C314 and C438-C451.

In terms of assembly, homooligomer. Interacts with TEK/TIE2. Interacts with SVEP1/polydom. Interacts with THBD; this interaction significantly inhibits the generation of activated PC and TAFIa/CPB2 by the thrombin/thrombomodulin complex.

It is found in the secreted. Binds and activates TIE2 receptor by inducing its tyrosine phosphorylation. Implicated in endothelial developmental processes later and distinct from that of VEGF. Appears to play a crucial role in mediating reciprocal interactions between the endothelium and surrounding matrix and mesenchyme. Mediates blood vessel maturation/stability. It may play an important role in the heart early development. The sequence is that of Angiopoietin-1 (ANGPT1) from Canis lupus familiaris (Dog).